A 357-amino-acid polypeptide reads, in one-letter code: SUN domain-containing protein 3 (357 aa).

Topologically, residues 1–47 (MSGKTKARRAAMFFRRCSEDASGSASGNALLSEDENPDANGVTRSWK) are nuclear. A helical membrane pass occupies residues 48–64 (IILSTMLTLTFLLVGLL). The Perinuclear space segment spans residues 65–357 (NHQWLKETDV…RVHGTPGKHI (293 aa)). Residues 98–146 (RLRMPKEQLELLKKESQNLENNFRQILFLIEQIDVLKALLRDMKDGMDN) adopt a coiled-coil conformation. Residues 193 to 354 (GASIIEAGTS…YRFRVHGTPG (162 aa)) enclose the SUN domain.

In terms of assembly, self-associates. Interacts with SYNE1 and SPAG4/SUN4. Proposed to form a spermatogenesis-specific LINC complex with SYNE1 during sperm head formation possibly implicating a SUN domain-based heterotrimer with SPAG4/SUN4 associating with SYNE1.

Its subcellular location is the membrane. The protein resides in the nucleus envelope. It localises to the nucleus inner membrane. In terms of biological role, as a probable component of the LINC (LInker of Nucleoskeleton and Cytoskeleton) complex, involved in the connection between the nuclear lamina and the cytoskeleton. The nucleocytoplasmic interactions established by the LINC complex play an important role in the transmission of mechanical forces across the nuclear envelope and in nuclear movement and positioning. May be involved in nuclear remodeling during sperm head formation in spermatogenesis. A probable SUN3:SYNE1 LINC complex may tether spermatid nuclei to posterior cytoskeletal structures such as the manchette. The protein is SUN domain-containing protein 3 (SUN3) of Homo sapiens (Human).